The following is a 564-amino-acid chain: Copine-8 (564 aa).

2 consecutive C2 domains span residues 1–133 and 142–265; these read MDSR…RLEK and KCGT…FNVY. Aspartate 39, aspartate 45, aspartate 99, aspartate 101, serine 104, lysine 109, aspartate 111, aspartate 173, aspartate 179, aspartate 235, aspartate 237, and aspartate 243 together coordinate Ca(2+). Serine 260 is modified (phosphoserine). The 202-residue stretch at 309–510 folds into the VWFA domain; the sequence is NFTVAIDFTA…VQFVPFRDYI (202 aa).

The protein belongs to the copine family. Ca(2+) is required as a cofactor.

Probable calcium-dependent phospholipid-binding protein that may play a role in calcium-mediated intracellular processes. This Homo sapiens (Human) protein is Copine-8.